A 137-amino-acid polypeptide reads, in one-letter code: Large-conductance mechanosensitive channel (137 aa).

Helical transmembrane passes span 9 to 29 (AFAV…GAAF) and 79 to 99 (IQTI…VKVI).

Belongs to the MscL family. Homopentamer.

The protein resides in the cell inner membrane. Channel that opens in response to stretch forces in the membrane lipid bilayer. May participate in the regulation of osmotic pressure changes within the cell. This chain is Large-conductance mechanosensitive channel, found in Pseudomonas entomophila (strain L48).